The chain runs to 497 residues: Iron-sulfur cluster assembly factor IBA57, mitochondrial (497 aa).

Residues 1 to 27 (MFISRRCRIKGFTLKNLLWFRSSSTRF) constitute a mitochondrion transit peptide. The interval 414–433 (PTLNPFTNKPPERTKRKQRP) is disordered.

It belongs to the GcvT family. CAF17/IBA57 subfamily. Interacts with CCR4, ISA1 and ISA2.

Its subcellular location is the mitochondrion matrix. In terms of biological role, required for lysine and glutamate prototrophy and mitochondrial genome maintenance. Has a role in the maturation of mitochondrial aconitase-type and radical-SAM Fe/S proteins biotin synthase and lipoic acid synthase. The polypeptide is Iron-sulfur cluster assembly factor IBA57, mitochondrial (Saccharomyces cerevisiae (strain ATCC 204508 / S288c) (Baker's yeast)).